The sequence spans 262 residues: Transmembrane and immunoglobulin domain-containing protein 1 (262 aa).

Residues Met-1–Ser-29 form the signal peptide. The region spanning Val-30–Ser-114 is the Ig-like C2-type 1 domain. Over Val-30–Pro-220 the chain is Extracellular. Cys-54 and Cys-103 are oxidised to a cystine. Asn-58, Asn-83, Asn-118, Asn-158, and Asn-190 each carry an N-linked (GlcNAc...) asparagine glycan. Residues Pro-122 to Asp-207 form the Ig-like C2-type 2 domain. An intrachain disulfide couples Cys-143 to Cys-195. The helical transmembrane segment at Ile-221–Ala-241 threads the bilayer. The Cytoplasmic segment spans residues Arg-242–Leu-262.

Homodimer. Post-translationally, N-glycosylated.

The protein localises to the cell membrane. The protein resides in the cytoplasm. In terms of biological role, may control cell-cell adhesion, cell migration and proliferation, cell morphology, and protects renal epithelial cells from oxidative cell injury to promote cell survival. The sequence is that of Transmembrane and immunoglobulin domain-containing protein 1 from Homo sapiens (Human).